Reading from the N-terminus, the 127-residue chain is Protein translocase subunit SecE (127 aa).

3 helical membrane-spanning segments follow: residues 17-37 (VKWI…MCFY), 41-61 (LFIR…TMIY), and 95-115 (FIVI…DSVI).

This sequence belongs to the SecE/SEC61-gamma family. As to quaternary structure, component of the Sec protein translocase complex. Heterotrimer consisting of SecY, SecE and SecG subunits. The heterotrimers can form oligomers, although 1 heterotrimer is thought to be able to translocate proteins. Interacts with the ribosome. Interacts with SecDF, and other proteins may be involved. Interacts with SecA.

The protein resides in the cell inner membrane. In terms of biological role, essential subunit of the Sec protein translocation channel SecYEG. Clamps together the 2 halves of SecY. May contact the channel plug during translocation. This is Protein translocase subunit SecE from Buchnera aphidicola subsp. Acyrthosiphon pisum (strain APS) (Acyrthosiphon pisum symbiotic bacterium).